The following is a 248-amino-acid chain: tRNA (guanine-N(1)-)-methyltransferase (248 aa).

Residues glycine 113 and 133–138 contribute to the S-adenosyl-L-methionine site; that span reads IGDYVL.

It belongs to the RNA methyltransferase TrmD family. Homodimer.

The protein localises to the cytoplasm. The enzyme catalyses guanosine(37) in tRNA + S-adenosyl-L-methionine = N(1)-methylguanosine(37) in tRNA + S-adenosyl-L-homocysteine + H(+). Its function is as follows. Specifically methylates guanosine-37 in various tRNAs. This is tRNA (guanine-N(1)-)-methyltransferase from Shewanella baltica (strain OS223).